The sequence spans 469 residues: Acetyl-CoA decarbonylase/synthase complex subunit beta 1 (469 aa).

Positions 189, 192, 278, and 280 each coordinate [Ni-Fe-S] cluster.

This sequence belongs to the CdhC family. As to quaternary structure, monomer. The ACDS complex is made up of alpha, epsilon, beta, gamma and delta chains with a probable stoichiometry of (alpha(2)epsilon(2))(4)-beta(8)-(gamma(1)delta(1))(8) (Potential). [Ni-Fe-S] cluster serves as cofactor.

The enzyme catalyses Co(I)-[corrinoid Fe-S protein] + acetyl-CoA + H(+) = methyl-Co(III)-[corrinoid Fe-S protein] + CO + CoA. It functions in the pathway one-carbon metabolism; methanogenesis from acetate. Its function is as follows. Part of a complex that catalyzes the reversible cleavage of acetyl-CoA, allowing growth on acetate as sole source of carbon and energy. The alpha-epsilon complex generates CO from CO(2), while the beta subunit (this protein) combines the CO with CoA and a methyl group to form acetyl-CoA. The methyl group, which is incorporated into acetyl-CoA, is transferred to the beta subunit by a corrinoid iron-sulfur protein (the gamma-delta complex). The polypeptide is Acetyl-CoA decarbonylase/synthase complex subunit beta 1 (cdhC1) (Methanosarcina acetivorans (strain ATCC 35395 / DSM 2834 / JCM 12185 / C2A)).